Consider the following 229-residue polypeptide: Choline-phosphate cytidylyltransferase (229 aa).

Residues leucine 6, alanine 8, glycine 9, tyrosine 80, asparagine 82, serine 85, and alanine 101 each coordinate CDP-choline. Aspartate 102 provides a ligand contact to Mg(2+). Residue tyrosine 185 participates in CDP-choline binding. Residues glutamate 211 and aspartate 213 each contribute to the Mg(2+) site.

Belongs to the LicC/PntC cytidylyltransferase family. As to quaternary structure, monomer. Forms dimers in LicC-CDP-Cho-Mg(2+) crystals, but the monomer is probably the biologically functional unit. Requires Mg(2+) as cofactor.

The enzyme catalyses phosphocholine + CTP + H(+) = CDP-choline + diphosphate. It functions in the pathway cell wall biogenesis; teichoic acid biosynthesis. Its pathway is cell wall biogenesis; lipoteichoic acid biosynthesis. With respect to regulation, mg(2+) in slight excess of CTP gives maximal activity. Strongly inhibited by Ca(2+) and several other metal ions, such as Cd(2+), Co(2+), Cu(2+), Mn(2+), Ni(2+), Zn(2+) and Fe(2+). Also inhibited by Mg(2+) at high concentrations. CDP-Cho is a competitive inhibitor with respect to CTP, whereas diphosphate is a mixed-type inhibitor with respect to CTP. Functionally, cytidylyltransferase involved in the biosynthesis of the phosphocholine containing cell wall constituents, teichoic acid and lipoteichoic acid, which are essential for cell separation and pathogenesis. Catalyzes the activation of phosphocholine (P-Cho) to CDP-choline (CDP-Cho). Can also use phosphoethanolamine and 2-aminoethylphosphonate, with much lower efficiency. Shows lower activity with dCTP, weak activity with ATP and no activity with GTP, TTP, UTP, dATP, dGTP and dTTP. The protein is Choline-phosphate cytidylyltransferase of Streptococcus pneumoniae (strain ATCC BAA-255 / R6).